Here is a 468-residue protein sequence, read N- to C-terminus: Mitochondrial distribution and morphology protein 10 (468 aa).

Over residues 370-386 (ERDGLPGIQRDDHDMHH) the composition is skewed to basic and acidic residues. A disordered region spans residues 370-394 (ERDGLPGIQRDDHDMHHHPQRPHAS).

It belongs to the MDM10 family. In terms of assembly, component of the ER-mitochondria encounter structure (ERMES) or MDM complex, composed of MMM1, MDM10, MDM12 and MDM34. Associates with the mitochondrial outer membrane sorting assembly machinery SAM(core) complex.

It is found in the mitochondrion outer membrane. Its function is as follows. Component of the ERMES/MDM complex, which serves as a molecular tether to connect the endoplasmic reticulum and mitochondria. Components of this complex are involved in the control of mitochondrial shape and protein biogenesis and may function in phospholipid exchange. MDM10 is involved in the late assembly steps of the general translocase of the mitochondrial outer membrane (TOM complex). Functions in the TOM40-specific route of the assembly of outer membrane beta-barrel proteins, including the association of TOM40 with the receptor TOM22 and small TOM proteins. Can associate with the SAM(core) complex as well as the MDM12-MMM1 complex, both involved in late steps of the major beta-barrel assembly pathway, that is responsible for biogenesis of all outer membrane beta-barrel proteins. May act as a switch that shuttles between both complexes and channels precursor proteins into the TOM40-specific pathway. Plays a role in mitochondrial morphology and in the inheritance of mitochondria. This chain is Mitochondrial distribution and morphology protein 10, found in Ajellomyces dermatitidis (strain ER-3 / ATCC MYA-2586) (Blastomyces dermatitidis).